The following is a 198-amino-acid chain: Small ribosomal subunit protein uS7 (198 aa).

The protein belongs to the universal ribosomal protein uS7 family. In terms of assembly, part of the 30S ribosomal subunit.

In terms of biological role, one of the primary rRNA binding proteins, it binds directly to 16S rRNA where it nucleates assembly of the head domain of the 30S subunit. Is located at the subunit interface close to the decoding center. This is Small ribosomal subunit protein uS7 from Nanoarchaeum equitans (strain Kin4-M).